We begin with the raw amino-acid sequence, 486 residues long: Probable transporter MCH1 (486 aa).

Over 1–29 (MPLSKVEHYLSYHTRLLLPHVLSLQSSHR) the chain is Cytoplasmic. Residues 30-50 (VAYIFSLLSAVSTGFITLISL) form a helical membrane-spanning segment. Residues 51–67 (YSQPWQKHLNYSSWQIN) are Vacuolar-facing. Residue asparagine 60 is glycosylated (N-linked (GlcNAc...) asparagine). The helical transmembrane segment at 68-88 (TIASMTNLGMYLTPPILGMIA) threads the bilayer. Residues 89–93 (DSHGP) are Cytoplasmic-facing. A helical membrane pass occupies residues 94-114 (ITLSLLAIIGFIPSYSYLAYV). Over 115 to 133 (FNHPELSLGGNGDSSFNLS) the chain is Vacuolar. N-linked (GlcNAc...) asparagine glycosylation occurs at asparagine 131. A helical transmembrane segment spans residues 134-154 (IICFVFIGISTSALYFSALLT). Residues 155 to 163 (CTKLYPHTK) lie on the Cytoplasmic side of the membrane. The helical transmembrane segment at 164 to 184 (LLSISLPTTCYGISSVVGSQL) threads the bilayer. Over 185-212 (LRIKWFWSSNASSSSSNSDLNLGRVFQT) the chain is Vacuolar. N-linked (GlcNAc...) asparagine glycosylation occurs at asparagine 194. Residues 213 to 233 (FALVYVVIGLLAWIATSVVSL) form a helical membrane-spanning segment. The Cytoplasmic segment spans residues 234-279 (LHFNEEQDNQKRLDDQTDVEQSPLLERSNHVQEKFTQTMLRIFSDP). Serine 255 is modified (phosphoserine). The helical transmembrane segment at 280–300 (VTYILAVSILLSLGPLEMFIA) threads the bilayer. Residues 301 to 320 (NMGSLTNLLVQLDAPTLSTK) are Vacuolar-facing. Residues 321 to 343 (LLSTYALSSTFTRLLTGIVADFF) traverse the membrane as a helical segment. Over 344–347 (AKKK) the chain is Cytoplasmic. The helical transmembrane segment at 348 to 368 (ISIKWILLTFLSLGVCAQLFL) threads the bilayer. The Vacuolar segment spans residues 369–385 (LKMTSSASPWGLVPTGS). A helical transmembrane segment spans residues 386-406 (LVGIVYGGLFTVYPTLVLLVW). The Cytoplasmic portion of the chain corresponds to 407–413 (GERSFGT). Residues 414 to 434 (VYGSLLIAPAIGSMIFCMLYA) traverse the membrane as a helical segment. Residues 435–456 (KFYDSRCMSGGGDLRNPSCISA) lie on the Vacuolar side of the membrane. The helical transmembrane segment at 457–477 (VYKYSSIAFVVSAVLSAVVFW) threads the bilayer. Residues 478–486 (KLKSRKLRI) lie on the Cytoplasmic side of the membrane.

This sequence belongs to the major facilitator superfamily.

The protein resides in the vacuole membrane. Probable transporter. Does not act in the transport of monocarboxylic acids across the plasma membrane. The chain is Probable transporter MCH1 (MCH1) from Saccharomyces cerevisiae (strain ATCC 204508 / S288c) (Baker's yeast).